The sequence spans 213 residues: Putative amidate substrates transporter protein (213 aa).

A run of 6 helical transmembrane segments spans residues 4–20 (VGLF…GLML), 32–48 (LNFF…TVLI), 56–72 (AVIF…FTYL), 116–132 (VIWL…FLLL), 146–162 (VAVA…AFLI), and 172–188 (LPAA…VVLA).

This sequence belongs to the AmiS/UreI family.

Its subcellular location is the cell membrane. Functionally, possible transporter that might be responsible for the adsorption of amidase substrates or release of their hydrolysis products. This Mycolicibacterium smegmatis (Mycobacterium smegmatis) protein is Putative amidate substrates transporter protein.